Consider the following 310-residue polypeptide: MDKIFVEEAVSELHTLQDMIRWTVSRFNAANLFYGHGTDNAWDEAVQLILPTLYLPIDVPPHVLNSRLTGSERLRIVERVIKRINERTPIAYLTNKAWFCGLEFYVDERVLVPRSPIGELIEAQFQPWLIDEPVRIMDLCTGSGCIAIACAHAFPDAEVDAIDISTDALQVAEQNIQDHGMEQQVFPIRSDLFRDLPKEKYDLIVSNPPYVDQEDMNSLPKEFKHEPELGLAAGTDGLKLVRRILANAAGYLTDNGILICEVGNSMVHMMNQYDHIPFTWLEFENGGHGVFMLTRQQLVDCASDFALYID.

Belongs to the protein N5-glutamine methyltransferase family. PrmB subfamily.

The enzyme catalyses L-glutaminyl-[ribosomal protein uL3] + S-adenosyl-L-methionine = N(5)-methyl-L-glutaminyl-[ribosomal protein uL3] + S-adenosyl-L-homocysteine + H(+). Methylates large ribosomal subunit protein uL3 on a specific glutamine residue. This Vibrio anguillarum (strain ATCC 68554 / 775) (Listonella anguillarum) protein is Ribosomal protein uL3 glutamine methyltransferase.